The primary structure comprises 83 residues: Apolipoprotein C-I, acidic form (83 aa).

Positions 1-26 (MRLFLSLPVLVVVLSMVLEGPAPAQG) are cleaved as a signal peptide.

It belongs to the apolipoprotein C1 family.

Its subcellular location is the secreted. This is Apolipoprotein C-I, acidic form (APOC1A) from Gorilla gorilla gorilla (Western lowland gorilla).